The following is a 428-amino-acid chain: Adenylosuccinate synthetase (428 aa).

GTP-binding positions include 12–18 (GDEGKGK) and 40–42 (GHT). Residue aspartate 13 is the Proton acceptor of the active site. Residues aspartate 13 and glycine 40 each contribute to the Mg(2+) site. IMP contacts are provided by residues 13–16 (DEGK), 38–41 (NAGH), threonine 130, arginine 144, glutamine 225, threonine 240, and arginine 304. The active-site Proton donor is the histidine 41. Residue 300–306 (VTTGRSR) coordinates substrate. Residues arginine 306, 332–334 (KID), and 414–416 (GVG) each bind GTP.

This sequence belongs to the adenylosuccinate synthetase family. In terms of assembly, homodimer. Mg(2+) is required as a cofactor.

The protein resides in the cytoplasm. The enzyme catalyses IMP + L-aspartate + GTP = N(6)-(1,2-dicarboxyethyl)-AMP + GDP + phosphate + 2 H(+). Its pathway is purine metabolism; AMP biosynthesis via de novo pathway; AMP from IMP: step 1/2. Its function is as follows. Plays an important role in the de novo pathway of purine nucleotide biosynthesis. Catalyzes the first committed step in the biosynthesis of AMP from IMP. The polypeptide is Adenylosuccinate synthetase (Clostridium botulinum (strain Alaska E43 / Type E3)).